Here is a 183-residue protein sequence, read N- to C-terminus: uncharacterized protein (183 aa).

This is an uncharacterized protein from Treponema pallidum (strain Nichols).